The primary structure comprises 860 residues: Leucine--tRNA ligase (860 aa).

The short motif at 42–52 (PYPSGRLHMGH) is the 'HIGH' region element. The short motif at 619–623 (KMSKS) is the 'KMSKS' region element. An ATP-binding site is contributed by Lys-622.

It belongs to the class-I aminoacyl-tRNA synthetase family.

The protein resides in the cytoplasm. It carries out the reaction tRNA(Leu) + L-leucine + ATP = L-leucyl-tRNA(Leu) + AMP + diphosphate. The protein is Leucine--tRNA ligase of Escherichia coli O6:K15:H31 (strain 536 / UPEC).